The sequence spans 350 residues: Nicotinate-nucleotide--dimethylbenzimidazole phosphoribosyltransferase (350 aa).

Glu-316 functions as the Proton acceptor in the catalytic mechanism.

This sequence belongs to the CobT family.

It carries out the reaction 5,6-dimethylbenzimidazole + nicotinate beta-D-ribonucleotide = alpha-ribazole 5'-phosphate + nicotinate + H(+). It functions in the pathway nucleoside biosynthesis; alpha-ribazole biosynthesis; alpha-ribazole from 5,6-dimethylbenzimidazole: step 1/2. Functionally, catalyzes the synthesis of alpha-ribazole-5'-phosphate from nicotinate mononucleotide (NAMN) and 5,6-dimethylbenzimidazole (DMB). The sequence is that of Nicotinate-nucleotide--dimethylbenzimidazole phosphoribosyltransferase from Pseudomonas savastanoi pv. phaseolicola (strain 1448A / Race 6) (Pseudomonas syringae pv. phaseolicola (strain 1448A / Race 6)).